A 353-amino-acid chain; its full sequence is UDP-N-acetylglucosamine--N-acetylmuramyl-(pentapeptide) pyrophosphoryl-undecaprenol N-acetylglucosamine transferase (353 aa).

UDP-N-acetyl-alpha-D-glucosamine is bound by residues 10-12 (TGG), N124, S183, and Q283.

Belongs to the glycosyltransferase 28 family. MurG subfamily.

Its subcellular location is the cell inner membrane. The catalysed reaction is di-trans,octa-cis-undecaprenyl diphospho-N-acetyl-alpha-D-muramoyl-L-alanyl-D-glutamyl-meso-2,6-diaminopimeloyl-D-alanyl-D-alanine + UDP-N-acetyl-alpha-D-glucosamine = di-trans,octa-cis-undecaprenyl diphospho-[N-acetyl-alpha-D-glucosaminyl-(1-&gt;4)]-N-acetyl-alpha-D-muramoyl-L-alanyl-D-glutamyl-meso-2,6-diaminopimeloyl-D-alanyl-D-alanine + UDP + H(+). Its pathway is cell wall biogenesis; peptidoglycan biosynthesis. Functionally, cell wall formation. Catalyzes the transfer of a GlcNAc subunit on undecaprenyl-pyrophosphoryl-MurNAc-pentapeptide (lipid intermediate I) to form undecaprenyl-pyrophosphoryl-MurNAc-(pentapeptide)GlcNAc (lipid intermediate II). This is UDP-N-acetylglucosamine--N-acetylmuramyl-(pentapeptide) pyrophosphoryl-undecaprenol N-acetylglucosamine transferase from Helicobacter pylori (strain HPAG1).